The sequence spans 526 residues: Cytochrome P450 monooxygenase SAT11 (526 aa).

The helical transmembrane segment at 18–38 (AFLLIAMLYLGYLLCICFYNI) threads the bilayer. N-linked (GlcNAc...) asparagine glycans are attached at residues asparagine 125 and asparagine 447. Residue cysteine 455 coordinates heme. An N-linked (GlcNAc...) asparagine glycan is attached at asparagine 520.

Belongs to the cytochrome P450 family. Requires heme as cofactor.

The protein resides in the membrane. Its pathway is mycotoxin biosynthesis. Cytochrome P450 monooxygenase; part of the satratoxin SC2 cluster involved in the biosynthesis of satratoxins, trichothecene mycotoxins that are associated with human food poisonings. Satratoxins are suggested to be made by products of multiple gene clusters (SC1, SC2 and SC3) that encode 21 proteins in all, including polyketide synthases, acetyltransferases, and other enzymes expected to modify the trichothecene skeleton. SC1 encodes 10 proteins, SAT1 to SAT10. The largest are SAT8, which encodes a putative polyketide synthase (PKS) with a conventional non-reducing architecture, and SAT10, a putative protein containing four ankyrin repeats and thus may be involved in protein scaffolding. The putative short-chain reductase SAT3 may assist the PKS in some capacity. SAT6 contains a secretory lipase domain and acts probably as a trichothecene esterase. SAT5 encodes a putative acetyltransferase, and so, with SAT6, may affect endogenous protection from toxicity. The probable transcription factor SAT9 may regulate the expression of the SC1 cluster. SC2 encodes proteins SAT11 to SAT16, the largest of which encodes the putative reducing PKS SAT13. SAT11 is a cytochrome P450 monooxygenase, while SAT14 and SAT16 are probable acetyltransferases. The SC2 cluster may be regulated by the transcription factor SAT15. SC3 is a small cluster that encodes 5 proteins, SAT17 to SAT21. SAT21 is a putative MFS-type transporter which may have a role in exporting secondary metabolites. The four other proteins putatively encoded in SC3 include the taurine hydroxylase-like protein SAT17, the O-methyltransferase SAT18, the acetyltransferase SAT19, and the Cys6-type zinc finger SAT20, the latter being probably involved in regulation of SC3 expression. The protein is Cytochrome P450 monooxygenase SAT11 of Stachybotrys chartarum (strain CBS 109288 / IBT 7711) (Toxic black mold).